The primary structure comprises 380 residues: Shaggy-related protein kinase eta (380 aa).

Residues 40–324 form the Protein kinase domain; that stretch reads YMAERVVGTG…ALEACAHPFF (285 aa). ATP-binding positions include 46–54 and lysine 69; that span reads VGTGSFGIV. Threonine 104 is subject to Phosphothreonine. Serine 105 carries the phosphoserine modification. Aspartate 165 functions as the Proton acceptor in the catalytic mechanism. Serine 187 bears the Phosphoserine mark. Tyrosine 200 is modified (phosphotyrosine). 2 positions are modified to phosphothreonine: threonine 220 and threonine 261. At serine 310 the chain carries Phosphoserine. Threonine 314 carries the post-translational modification Phosphothreonine. Serine 353 is subject to Phosphoserine.

This sequence belongs to the protein kinase superfamily. CMGC Ser/Thr protein kinase family. GSK-3 subfamily. As to quaternary structure, interacts in vitro with the C-terminal fragment of BZR1 and with BES1/BZR2, but not through the kinase domain. Interacts with BHLH150, beet curly top virus AL4/C4 and tomato golden mosaic virus AL4/AC4. Interacts with YDA. Interacts with MKK4. Interacts with KIB1 and KIB2 in a brassinosteroid (BR)-dependent manner. Interacts with BSK1, BSK6, BSK8 and BSK11. Binds to WRKY46, WRKY54 and WRKY70. Component of a complex made of POLAR, BASL, ASK7/BIN2 and ASK3/SK12. Binds to POLAR and BASL. Post-translationally, autophosphorylated mainly on threonine and serine residues. In terms of processing, ubiquitination and subsequent proteasomal degradation mediated by KIB1. In terms of tissue distribution, in the two outer cell layers of the developing seed coat and restricted to the suspensor cells in developing embryos. Mostly expressed in stomatal lineage cells with asymmetric cell division (ACD) potential. Observed in small cells of non-protruding hypocotyl cell files and of developing cotyledon epidermis.

It is found in the cytoplasm. Its subcellular location is the cell cortex. It localises to the nucleus. The protein localises to the cell membrane. It catalyses the reaction L-seryl-[protein] + ATP = O-phospho-L-seryl-[protein] + ADP + H(+). The enzyme catalyses L-threonyl-[protein] + ATP = O-phospho-L-threonyl-[protein] + ADP + H(+). With respect to regulation, inactivated by an unknown mechanism after binding of brassinosteroids to the brassinosteroid receptor complex. Inhibited by lithium. Inhibited by dephosphorylation at Tyr-200 by BSU1. Competitive inhibition by KIB1 that reduces substrate (e.g. BZR1) access. Repressed by bikinin. Functionally, negative regulator in brassinosteroid signal transduction pathway important for plant growth. May be also involved in auxin signaling pathway. Phosphorylates and increases the degradation of BZR1 and BZR2/BES1 by the proteasome. Phosphorylates BHLH150, beet curly top virus C4 and tomato golden mosaic virus AC4 on threonine and serine residues. Upon brassinosteroid signaling, inhibits stomatal development by phosphorylating and inhibiting the MAPKK kinase YDA and the MAPK kinases MKK4 and MKK5. Phosphorylates BSK1, BSK3, BSK5, BSK6, BSK8 and BSK11 in vitro. Phoyphorylates and destabilizes WRKY46, WRKY54 and WRKY70. Mediates BASL nuclear exclusion; kinase activity is required for this function. Required first at the cortical polarity site, to restrict MAPK signaling and promote asymmetric cell division (ACD), and second in the nucleus of stomatal lineage ground cells (SLGCs) or meristemoids, to limit cell division and to promote differentiation into pavement or stomatal guard cells, respectively, likely by initiating BASL polarization. Phosphorylates BASL, YDA and SPCH in vitro and POLAR in vivo. Phosphorylates and inhibits SPCH in the nucleus of SLGC undergoing ACD, thus negatively regulating stomatal development. In Arabidopsis thaliana (Mouse-ear cress), this protein is Shaggy-related protein kinase eta.